We begin with the raw amino-acid sequence, 153 residues long: 3-hydroxyacyl-[acyl-carrier-protein] dehydratase FabZ (153 aa).

H53 is an active-site residue.

It belongs to the thioester dehydratase family. FabZ subfamily.

The protein resides in the cytoplasm. The catalysed reaction is a (3R)-hydroxyacyl-[ACP] = a (2E)-enoyl-[ACP] + H2O. Involved in unsaturated fatty acids biosynthesis. Catalyzes the dehydration of short chain beta-hydroxyacyl-ACPs and long chain saturated and unsaturated beta-hydroxyacyl-ACPs. The polypeptide is 3-hydroxyacyl-[acyl-carrier-protein] dehydratase FabZ (Lawsonia intracellularis (strain PHE/MN1-00)).